Consider the following 275-residue polypeptide: Large ribosomal subunit protein uL2c (275 aa).

Disordered regions lie at residues 29 to 60 (PEKSLTYGRHRSQGRNNRGIITSRHRGGGHKR) and 225 to 252 (MNPVDHPHGGGEGRAPIGRSKPVTPWGH). Basic residues predominate over residues 51-60 (SRHRGGGHKR).

This sequence belongs to the universal ribosomal protein uL2 family. As to quaternary structure, part of the 50S ribosomal subunit.

The protein localises to the plastid. The protein resides in the chloroplast. This chain is Large ribosomal subunit protein uL2c (rpl2), found in Chlorokybus atmophyticus (Soil alga).